A 68-amino-acid chain; its full sequence is Large ribosomal subunit protein bL35 (68 aa).

The protein belongs to the bacterial ribosomal protein bL35 family.

In Rickettsia conorii (strain ATCC VR-613 / Malish 7), this protein is Large ribosomal subunit protein bL35.